The primary structure comprises 84 residues: UPF0291 protein SMU_447 (84 aa).

A disordered region spans residues 57 to 84; the sequence is EGNDITPAKLKEIQRQKGIHGRKPEDNS.

This sequence belongs to the UPF0291 family.

The protein localises to the cytoplasm. The sequence is that of UPF0291 protein SMU_447 from Streptococcus mutans serotype c (strain ATCC 700610 / UA159).